The chain runs to 213 residues: ATP phosphoribosyltransferase (213 aa).

The protein belongs to the ATP phosphoribosyltransferase family. Short subfamily. In terms of assembly, heteromultimer composed of HisG and HisZ subunits.

It is found in the cytoplasm. It carries out the reaction 1-(5-phospho-beta-D-ribosyl)-ATP + diphosphate = 5-phospho-alpha-D-ribose 1-diphosphate + ATP. It participates in amino-acid biosynthesis; L-histidine biosynthesis; L-histidine from 5-phospho-alpha-D-ribose 1-diphosphate: step 1/9. Functionally, catalyzes the condensation of ATP and 5-phosphoribose 1-diphosphate to form N'-(5'-phosphoribosyl)-ATP (PR-ATP). Has a crucial role in the pathway because the rate of histidine biosynthesis seems to be controlled primarily by regulation of HisG enzymatic activity. This Bacillus licheniformis (strain ATCC 14580 / DSM 13 / JCM 2505 / CCUG 7422 / NBRC 12200 / NCIMB 9375 / NCTC 10341 / NRRL NRS-1264 / Gibson 46) protein is ATP phosphoribosyltransferase.